Consider the following 284-residue polypeptide: Pantothenate synthetase (284 aa).

Position 30–37 (M30–H37) interacts with ATP. H37 functions as the Proton donor in the catalytic mechanism. Q61 provides a ligand contact to (R)-pantoate. Q61 serves as a coordination point for beta-alanine. Residue G147–D150 participates in ATP binding. Position 153 (Q153) interacts with (R)-pantoate. ATP is bound by residues V176 and K184–R187.

The protein belongs to the pantothenate synthetase family. Homodimer.

The protein resides in the cytoplasm. The catalysed reaction is (R)-pantoate + beta-alanine + ATP = (R)-pantothenate + AMP + diphosphate + H(+). It participates in cofactor biosynthesis; (R)-pantothenate biosynthesis; (R)-pantothenate from (R)-pantoate and beta-alanine: step 1/1. Functionally, catalyzes the condensation of pantoate with beta-alanine in an ATP-dependent reaction via a pantoyl-adenylate intermediate. The sequence is that of Pantothenate synthetase from Chloroherpeton thalassium (strain ATCC 35110 / GB-78).